The following is a 365-amino-acid chain: Mitogen-activated protein kinase HOG1A (365 aa).

A Protein kinase domain is found at 24-303 (YTDLQPVGMG…AADALAHPYL (280 aa)). ATP is bound by residues 30–38 (VGMGAFGLL) and Lys53. Asp145 (proton acceptor) is an active-site residue. Thr175 is subject to Phosphothreonine. The TXY signature appears at 175–177 (TGY). Residue Tyr177 is modified to Phosphotyrosine.

This sequence belongs to the protein kinase superfamily. Ser/Thr protein kinase family. MAP kinase subfamily. HOG1 sub-subfamily. Mg(2+) serves as cofactor. Phosphorylated. Dually phosphorylated on Thr-175 and Tyr-177, which activates the enzyme. Rapidly dephosphorylated upon either hypo- or hyperosmotic shock.

It localises to the cytoplasm. Its subcellular location is the nucleus. It catalyses the reaction L-seryl-[protein] + ATP = O-phospho-L-seryl-[protein] + ADP + H(+). It carries out the reaction L-threonyl-[protein] + ATP = O-phospho-L-threonyl-[protein] + ADP + H(+). Its activity is regulated as follows. Activated by tyrosine and threonine phosphorylation. Proline-directed serine/threonine-protein kinase involved in a signal transduction pathway that is activated by changes in the osmolarity of the extracellular environment. Controls osmotic regulation of transcription of target genes. This Wallemia ichthyophaga (strain EXF-994 / CBS 113033) protein is Mitogen-activated protein kinase HOG1A (HOG1A).